The chain runs to 325 residues: Exogastrula-inducing polypeptide (325 aa).

A signal peptide spans Met1–Ala19. Residues Glu20–Gly45 constitute a propeptide that is removed on maturation. 2 consecutive EGF-like domains span residues Thr48–Tyr91 and Thr107–Ser154. Cystine bridges form between Cys52–Cys65, Cys59–Cys75, Cys77–Cys90, Cys111–Cys124, Cys118–Cys138, and Cys140–Cys153. The propeptide occupies Glu160–Ala177. In terms of domain architecture, EGF-like 3 spans Ser180–Ser226. Intrachain disulfides connect Cys184/Cys197, Cys191/Cys211, and Cys213/Cys225. Positions Glu232–Ala249 are excised as a propeptide. An EGF-like 4 domain is found at Ser252–Ser298. 3 disulfide bridges follow: Cys256–Cys269, Cys263–Cys283, and Cys285–Cys297. Positions Met313–Glu325 are excised as a propeptide.

It is found in the secreted. Its subcellular location is the extracellular space. The protein localises to the extracellular matrix. The EGIP peptides are factors effective to extrude the archenteron toward outside of embryos. May have a role in the induction of gastrulation. The protein is Exogastrula-inducing polypeptide of Heliocidaris crassispina (Sea urchin).